A 153-amino-acid polypeptide reads, in one-letter code: uncharacterized protein (153 aa).

A signal peptide spans 1–22; it reads MKMLKKGTAVLFVMIMAVMLVA. Residue Cys23 is the site of N-palmitoyl cysteine attachment. Cys23 carries S-diacylglycerol cysteine lipidation. Residues 117 to 153 form a disordered region; sequence DMNKIPGMSSNGDTSKGISMEESAKMLESQGYKEVSK. The span at 124-133 shows a compositional bias: polar residues; sequence MSSNGDTSKG.

To E.coli YehR.

Its subcellular location is the cell membrane. This is an uncharacterized protein from Listeria monocytogenes serovar 1/2a (strain ATCC BAA-679 / EGD-e).